Reading from the N-terminus, the 310-residue chain is Coproporphyrin III ferrochelatase (310 aa).

The Fe(2+) site is built by histidine 184 and glutamate 265.

This sequence belongs to the ferrochelatase family.

The protein localises to the cytoplasm. The enzyme catalyses Fe-coproporphyrin III + 2 H(+) = coproporphyrin III + Fe(2+). The protein operates within porphyrin-containing compound metabolism; protoheme biosynthesis. Functionally, involved in coproporphyrin-dependent heme b biosynthesis. Catalyzes the insertion of ferrous iron into coproporphyrin III to form Fe-coproporphyrin III. The polypeptide is Coproporphyrin III ferrochelatase (Limosilactobacillus reuteri (strain DSM 20016) (Lactobacillus reuteri)).